We begin with the raw amino-acid sequence, 277 residues long: Deoxyguanosine kinase, mitochondrial (277 aa).

The N-terminal 39 residues, 1 to 39 (MAAGRFLLRRLRASFRSPLRNALVDAPHARAMHDGGGPR), are a transit peptide targeting the mitochondrion. 45 to 53 (GNIAVGKST) is a binding site for ATP. 4 residues coordinate substrate: glutamate 70, tyrosine 100, glutamine 111, and arginine 118. Glutamate 141 serves as the catalytic Proton acceptor. 2 residues coordinate substrate: arginine 142 and aspartate 147. Residue 206-208 (RDR) coordinates ATP. Glutamate 211 lines the substrate pocket. 254 to 256 (EDF) contributes to the ATP binding site.

The protein belongs to the DCK/DGK family. Homodimer. As to expression, spleen and thymus. Expressed at much lower levels in the brain and liver.

The protein resides in the mitochondrion. It is found in the cytoplasm. The enzyme catalyses 2'-deoxyguanosine + ATP = dGMP + ADP + H(+). It catalyses the reaction 2'-deoxyadenosine + ATP = dAMP + ADP + H(+). Phosphorylates deoxyguanosine and deoxyadenosine in the mitochondrial matrix, with the highest efficiency for deoxyguanosine. In non-replicating cells, where cytosolic dNTP synthesis is down-regulated, mtDNA synthesis depends solely on DGUOK and TK2. Phosphorylates certain nucleoside analogs. Widely used as target of antiviral and chemotherapeutic agents. This is Deoxyguanosine kinase, mitochondrial (Dguok) from Mus musculus (Mouse).